An 857-amino-acid polypeptide reads, in one-letter code: DNA mismatch repair protein MutS (857 aa).

613 to 620 (GPNMGGKS) is an ATP binding site. Residues 797–820 (TSLPHEQPAAHKAKDAPQVPHQSD) are disordered.

It belongs to the DNA mismatch repair MutS family.

Functionally, this protein is involved in the repair of mismatches in DNA. It is possible that it carries out the mismatch recognition step. This protein has a weak ATPase activity. This is DNA mismatch repair protein MutS from Pseudomonas putida (strain ATCC 700007 / DSM 6899 / JCM 31910 / BCRC 17059 / LMG 24140 / F1).